The chain runs to 241 residues: Carboxy-S-adenosyl-L-methionine synthase (241 aa).

S-adenosyl-L-methionine-binding positions include Tyr-38, 63–65 (GCS), 88–89 (DN), 116–117 (DI), Asn-131, and Arg-198.

This sequence belongs to the class I-like SAM-binding methyltransferase superfamily. Cx-SAM synthase family. As to quaternary structure, homodimer.

It catalyses the reaction prephenate + S-adenosyl-L-methionine = carboxy-S-adenosyl-L-methionine + 3-phenylpyruvate + H2O. Its function is as follows. Catalyzes the conversion of S-adenosyl-L-methionine (SAM) to carboxy-S-adenosyl-L-methionine (Cx-SAM). This chain is Carboxy-S-adenosyl-L-methionine synthase, found in Actinobacillus succinogenes (strain ATCC 55618 / DSM 22257 / CCUG 43843 / 130Z).